A 1054-amino-acid chain; its full sequence is Proteoglycan 4 (1054 aa).

Positions 1–24 (MGWKILPVCLSLLLPVVLIQQVSS) are cleaved as a signal peptide. 2 consecutive SMB domains span residues 26 to 69 (DLSS…PELS) and 66 to 108 (PELS…EEVH). Disulfide bonds link C30–C34, C30–C46, C34–C64, C44–C46, C44–C57, C50–C56, C57–C64, C70–C74, C70–C86, C74–C104, C84–C86, C84–C97, C90–C96, and C97–C104. N-linked (GlcNAc...) asparagine glycosylation is present at N109. A compositionally biased stretch (low complexity) spans 110-125 (STSPSSKTAPTPAGAS). Residues 110–764 (STSPSSKTAP…PLIPGPPVLF (655 aa)) form a disordered region. Residue S135 is glycosylated (O-linked (GalNAc...) serine). Residues 162 to 175 (QESSSSSSSSSSTI) are compositionally biased toward low complexity. A compositionally biased stretch (basic and acidic residues) spans 188–200 (ELQKNPNVKDNKK). Over residues 229-238 (TPPPPDPPTT) the composition is skewed to pro residues. O-linked (GalNAc...) threonine glycosylation is found at T237 and T250. The segment covering 286 to 295 (TTATNKQSSA) has biased composition (low complexity). T301 carries an O-linked (GalNAc...) threonine glycan. O-linked (GalNAc...) serine glycosylation occurs at S302. The segment covering 302–318 (SVKETRSAEKTSDKDVE) has biased composition (basic and acidic residues). A glycan (O-linked (GalNAc...) threonine) is linked at T306. O-linked (GalNAc...) serine glycosylation is present at S313. Residues 317–324 (VEPTSTTP) form a 1; approximate repeat. The interval 317-618 (VEPTSTTPKN…TPKKPEPTTT (302 aa)) is 37 X 8 AA repeats of K-X-P-X-P-T-T-X. Residues 319 to 328 (PTSTTPKNSA) are compositionally biased toward polar residues. The stretch at 325–332 (KNSAPTTT) is one 2; approximate repeat. O-linked (GalNAc...) serine glycosylation occurs at S327. The segment covering 329 to 339 (PTTTKKPVTTT) has biased composition (low complexity). T330, T338, T354, T362, T369, T377, T378, T385, T386, T393, and T394 each carry an O-linked (GalNAc...) threonine glycan. Residues 333 to 340 (KKPVTTTK) form a 3; approximate repeat. Residues 349–356 (QEPEPTTA) form a 4; approximate repeat. Repeat unit 5 spans residues 357-364 (KEPPPTTK). Residues 364 to 399 (KKPEPTTRKEPEPTTPKEPEPTTPKEPEPTTPKEPE) are compositionally biased toward basic and acidic residues. The 6; approximate repeat unit spans residues 365 to 371 (KPEPTTR). Tandem repeats lie at residues 372–379 (KEPEPTTP), 380–387 (KEPEPTTP), 388–395 (KEPEPTTP), 396–403 (KEPEPTTP), and 404–411 (KEPPPTTK). A compositionally biased stretch (pro residues) spans 400–426 (PTTPKEPPPTTKKPEPTTPKEPGPTTP). A 12; approximate repeat occupies 412 to 418 (KPEPTTP). 8 O-linked (GalNAc...) threonine glycosylation sites follow: T416, T417, T424, T432, T433, T440, T441, and T448. Tandem repeats lie at residues 419–426 (KEPGPTTP), 427–434 (KEPEPTTT), and 435–442 (KEPEPTTT). The segment covering 427 to 550 (KEPEPTTTKE…PEPTTPKKPE (124 aa)) has biased composition (basic and acidic residues). One copy of the 16; approximate repeat lies at 443-450 (KEPESTTR). 21 consecutive repeat copies span residues 451–458 (KEPEPTTP), 459–466 (KEPEPTTP), 467–474 (KEPEPTTL), 475–482 (KEPEPTTP), 483–490 (KEPEPTTP), 491–498 (KEPEPTTP), 499–506 (KEPEPTTP), 507–514 (KEPEPTTP), 515–522 (KEPEPTTP), 523–530 (KEPEPTTP), 531–538 (KEPEPTTP), 539–546 (KEPEPTTP), 547–554 (KKPEPTTP), 555–562 (KEPVPTTP), 563–570 (KEPEPTTP), 571–578 (KEPEPTTP), 579–586 (KEPEPTTR), 587–594 (KEPEPTTP), 595–602 (KEPEPTTP), 603–610 (KEPEPTTP), and 611–618 (KKPEPTTT). O-linked (GalNAc...) threonine glycans are attached at residues T472, T480, T481, T488, T489, T496, T497, T504, T505, T512, T520, T521, T528, and T529. Positions 551–562 (PTTPKEPVPTTP) are enriched in pro residues. T553, T560, T561, T568, T569, T576, and T577 each carry an O-linked (GalNAc...) threonine glycan. Residues 563–614 (KEPEPTTPKEPEPTTPKEPEPTTRKEPEPTTPKEPEPTTPKEPEPTTPKKPE) are compositionally biased toward basic and acidic residues. O-linked (GalNAc...) threonine glycans are attached at residues T592, T600, and T601. Residues 615 to 624 (PTTTSPKTTT) are compositionally biased toward low complexity. O-linked (GalNAc...) threonine glycans are attached at residues T622, T624, T628, T629, and T692. Residues 672 to 699 (KPTKKPTKAPKKPTSTKKPKTPKTRKPK) show a composition bias toward basic residues. A compositionally biased stretch (low complexity) spans 700 to 712 (TTPSPLKTTSATP). The span at 713-735 (ELNTTPLEVMLPTTTIPKQTPNP) shows a compositional bias: polar residues. C795 and C1053 form a disulfide bridge. Hemopexin repeat units follow at residues 797–840 (GKPV…VWGI) and 841–888 (PSPI…FGGL). N808 is a glycosylation site (N-linked (GlcNAc...) asparagine). T810 carries an O-linked (GalNAc...) threonine glycan. N938 is a glycosylation site (N-linked (GlcNAc...) asparagine).

As to quaternary structure, homodimer; disulfide-linked. N-glycosylated. Post-translationally, O-glycosylated; contains glycosaminoglycan chondroitin sulfate and keratan sulfate. O-glycosylated with sialylated oligosaccharides which are predominantly represented by the monosialylated core type I structure, NeuNAcalpha2-3Galbeta1-3GalNAc, with smaller amounts of disialylated O-glycans. In terms of processing, the disulfide bond between Cys-795 and Cys-1053 is essential for protein cleavage. Proteolytically cleaved by cathepsin CTSG. As to expression, highly expressed in cartilage, bone and liver and weakly expressed in heart, brain and muscle. Expressed in the surface chondrocytes and in synovial intimal cells. Isoform B is expressed in bone, small intestine, muscle, testis, heart, liver and lung. Isoform C and isoform D are widely expressed.

It localises to the secreted. Plays a role in boundary lubrication within articulating joints. Prevents protein deposition onto cartilage from synovial fluid by controlling adhesion-dependent synovial growth and inhibiting the adhesion of synovial cells to the cartilage surface. The protein is Proteoglycan 4 (Prg4) of Mus musculus (Mouse).